The chain runs to 280 residues: Late embryogenesis abundant protein 76 (280 aa).

Disordered stretches follow at residues 1 to 156 and 220 to 241; these read MASN…GEAV and EEED…TDPT. Residues 28–39 are compositionally biased toward basic and acidic residues; that stretch reads MRDKAEEGKDKT. LEA 11-mer repeat repeat units lie at residues 31–41, 53–63, 75–85, 97–107, and 119–129; these read KAEEGKDKTSQ, TAQAAKDKTSQ, and TTQSSKEKTSQ. Positions 40 to 114 are enriched in low complexity; the sequence is SQTAQKAQQK…TSQAAQTTQQ (75 aa). 2 stretches are compositionally biased toward basic and acidic residues: residues 115 to 127 and 136 to 145; these read KAHE…KEKT and EKARETKDKT. Over residues 230-239 the composition is skewed to low complexity; sequence TTTCTTQSTD.

The protein belongs to the LEA type 4 family.

In terms of biological role, lea proteins are late embryonic proteins abundant in higher plant seed embryos. This is Late embryogenesis abundant protein 76 from Brassica napus (Rape).